The following is a 176-amino-acid chain: NAD(P)H-quinone oxidoreductase subunit 6, chloroplastic (176 aa).

5 helical membrane-spanning segments follow: residues 10-30, 32-52, 61-81, 92-112, and 152-172; these read FLLVFLGSGLIVGGLGVVLLT, PIFSAFSLGLVLVCISLFFSL, AQLLIYVGAINVLILFAVMFM, LWTVGDGITSLVCTSIFISLI, and FFLPFELISIILLVSLIGAIA.

Belongs to the complex I subunit 6 family. In terms of assembly, NDH is composed of at least 16 different subunits, 5 of which are encoded in the nucleus.

The protein localises to the plastid. It localises to the chloroplast thylakoid membrane. It carries out the reaction a plastoquinone + NADH + (n+1) H(+)(in) = a plastoquinol + NAD(+) + n H(+)(out). The catalysed reaction is a plastoquinone + NADPH + (n+1) H(+)(in) = a plastoquinol + NADP(+) + n H(+)(out). In terms of biological role, NDH shuttles electrons from NAD(P)H:plastoquinone, via FMN and iron-sulfur (Fe-S) centers, to quinones in the photosynthetic chain and possibly in a chloroplast respiratory chain. The immediate electron acceptor for the enzyme in this species is believed to be plastoquinone. Couples the redox reaction to proton translocation, and thus conserves the redox energy in a proton gradient. In Oenothera argillicola (Appalachian evening primrose), this protein is NAD(P)H-quinone oxidoreductase subunit 6, chloroplastic (ndhG).